The primary structure comprises 143 residues: 3-dehydroquinate dehydratase (143 aa).

The active-site Proton acceptor is the Y22. Substrate contacts are provided by N73, H79, and D86. The active-site Proton donor is the H99. Substrate-binding positions include 100-101 (LS) and R110.

The protein belongs to the type-II 3-dehydroquinase family. In terms of assembly, homododecamer.

The catalysed reaction is 3-dehydroquinate = 3-dehydroshikimate + H2O. It functions in the pathway metabolic intermediate biosynthesis; chorismate biosynthesis; chorismate from D-erythrose 4-phosphate and phosphoenolpyruvate: step 3/7. Its function is as follows. Catalyzes a trans-dehydration via an enolate intermediate. In Salinispora tropica (strain ATCC BAA-916 / DSM 44818 / JCM 13857 / NBRC 105044 / CNB-440), this protein is 3-dehydroquinate dehydratase.